The sequence spans 477 residues: Tyrosine--tRNA ligase, mitochondrial (477 aa).

The transit peptide at 1 to 16 (MAAPILRSFSWGRWSG) directs the protein to the mitochondrion. Y77 contacts L-tyrosine. D81 serves as a coordination point for ATP. Residues 82–91 (PTADSLHVGH) carry the 'HIGH' region motif. Residues D121, Y221, Q225, and D228 each contribute to the L-tyrosine site. Residue 244–246 (GSD) participates in ATP binding. Q247 contacts L-tyrosine. 2 residues coordinate ATP: I274 and K284. The short motif at 281–285 (KLGKS) is the 'KMSKS' region element. K355 and K367 each carry N6-acetyllysine.

This sequence belongs to the class-I aminoacyl-tRNA synthetase family. In terms of assembly, homodimer.

It localises to the mitochondrion matrix. The catalysed reaction is tRNA(Tyr) + L-tyrosine + ATP = L-tyrosyl-tRNA(Tyr) + AMP + diphosphate + H(+). Functionally, catalyzes the attachment of tyrosine to tRNA(Tyr) in a two-step reaction: tyrosine is first activated by ATP to form Tyr-AMP and then transferred to the acceptor end of tRNA(Tyr). This is Tyrosine--tRNA ligase, mitochondrial (YARS2) from Homo sapiens (Human).